We begin with the raw amino-acid sequence, 352 residues long: Photosystem II D2 protein (352 aa).

Threonine 2 carries the post-translational modification N-acetylthreonine. Threonine 2 carries the phosphothreonine modification. The helical transmembrane segment at 40–60 (CAYFALGGWLTGTTFVTSWYT) threads the bilayer. A chlorophyll a-binding site is contributed by histidine 117. Residues 124–140 (GFMLRQFEIARAVKIRP) traverse the membrane as a helical segment. Residues glutamine 129 and asparagine 142 each coordinate pheophytin a. The helical transmembrane segment at 152-165 (VFVSVFLIYPLGQA) threads the bilayer. Histidine 197 serves as a coordination point for chlorophyll a. The chain crosses the membrane as a helical span at residues 207–227 (AALLCAIHGATVENTLFEDGD). A plastoquinone-binding residues include histidine 214 and phenylalanine 261. Histidine 214 contributes to the Fe cation binding site. Histidine 268 serves as a coordination point for Fe cation. Residues 278-294 (GLWMSALGVVGLALNLR) traverse the membrane as a helical segment.

The protein belongs to the reaction center PufL/M/PsbA/D family. PSII is composed of 1 copy each of membrane proteins PsbA, PsbB, PsbC, PsbD, PsbE, PsbF, PsbH, PsbI, PsbJ, PsbK, PsbL, PsbM, PsbT, PsbX, PsbY, PsbZ, Psb30/Ycf12, at least 3 peripheral proteins of the oxygen-evolving complex and a large number of cofactors. It forms dimeric complexes. The D1/D2 heterodimer binds P680, chlorophylls that are the primary electron donor of PSII, and subsequent electron acceptors. It shares a non-heme iron and each subunit binds pheophytin, quinone, additional chlorophylls, carotenoids and lipids. There is also a Cl(-1) ion associated with D1 and D2, which is required for oxygen evolution. The PSII complex binds additional chlorophylls, carotenoids and specific lipids. is required as a cofactor.

It localises to the plastid. The protein resides in the chloroplast thylakoid membrane. It catalyses the reaction 2 a plastoquinone + 4 hnu + 2 H2O = 2 a plastoquinol + O2. Photosystem II (PSII) is a light-driven water:plastoquinone oxidoreductase that uses light energy to abstract electrons from H(2)O, generating O(2) and a proton gradient subsequently used for ATP formation. It consists of a core antenna complex that captures photons, and an electron transfer chain that converts photonic excitation into a charge separation. The D1/D2 (PsbA/PsbD) reaction center heterodimer binds P680, the primary electron donor of PSII as well as several subsequent electron acceptors. D2 is needed for assembly of a stable PSII complex. This Tupiella akineta (Green alga) protein is Photosystem II D2 protein.